Consider the following 425-residue polypeptide: Enolase (425 aa).

Gln163 is a binding site for (2R)-2-phosphoglycerate. The active-site Proton donor is Glu205. The Mg(2+) site is built by Asp242, Glu285, and Asp312. (2R)-2-phosphoglycerate-binding residues include Lys337, Arg366, Ser367, and Lys388. The active-site Proton acceptor is Lys337.

The protein belongs to the enolase family. Mg(2+) is required as a cofactor.

The protein resides in the cytoplasm. The protein localises to the secreted. Its subcellular location is the cell surface. It carries out the reaction (2R)-2-phosphoglycerate = phosphoenolpyruvate + H2O. It participates in carbohydrate degradation; glycolysis; pyruvate from D-glyceraldehyde 3-phosphate: step 4/5. In terms of biological role, catalyzes the reversible conversion of 2-phosphoglycerate (2-PG) into phosphoenolpyruvate (PEP). It is essential for the degradation of carbohydrates via glycolysis. This Ruegeria sp. (strain TM1040) (Silicibacter sp.) protein is Enolase.